A 339-amino-acid polypeptide reads, in one-letter code: Serpentine receptor class r-10 (339 aa).

At 1 to 11 (MSGELWITLVD) the chain is on the extracellular side. Residues 12-32 (TADIVGVTLTFCVNIVLLGLL) form a helical membrane-spanning segment. At 33-42 (KTRGKNLGTY) the chain is on the cytoplasmic side. The chain crosses the membrane as a helical span at residues 43–63 (KYLMAFFSVFSIFYAIIEFIL). The Extracellular segment spans residues 64–92 (RPIMHIENTTFFLISRKRFNYSTKLGKIN). N-linked (GlcNAc...) asparagine glycosylation is found at Asn71 and Asn83. A helical membrane pass occupies residues 93-113 (SAFYCACFATSFVVSGVHFVY). Topologically, residues 114–131 (RYFATCKPNLLRLFNLPT) are cytoplasmic. A helical membrane pass occupies residues 132–152 (LLLWPLGCSVPVTMWASVSYF). Topologically, residues 153 to 201 (LYPDTEYTEAAVTNVLNNHYNWIKKENVSYIAYVYYQYENGVRHIYLKN) are extracellular. Asn179 carries an N-linked (GlcNAc...) asparagine glycan. A helical transmembrane segment spans residues 202 to 222 (LLGCFVHYFVMSMTFVVMFYC). Over 223–254 (GYATWKTMNEHKDVSDRTRALQKQLFKALVLQ) the chain is Cytoplasmic. Residues 255 to 275 (TLIPTIFMYAPTGVMFIAPFF) form a helical membrane-spanning segment. At 276-284 (DVNLNANAN) the chain is on the extracellular side. A helical membrane pass occupies residues 285 to 305 (FIVFCSFLYPGLDPLILILII). At 306-339 (RDFRRTIFNFLCGKKNSVDESRSTTRANLSQVPT) the chain is on the cytoplasmic side.

Belongs to the nematode receptor-like protein str family. In terms of assembly, interacts with odr-4. Strongly expressed in the sensory cilia of AWA olfactory neurons, and at low levels in the CEP neurons.

The protein localises to the cell projection. Its subcellular location is the cilium membrane. An odorant receptor which affects chemotaxis to the volatile odorant diacetyl. Specifies AWA neuronal cell fate via the odr-7 pathway. The chain is Serpentine receptor class r-10 from Caenorhabditis elegans.